We begin with the raw amino-acid sequence, 409 residues long: MAIEILVPDLPESVADATVATWHKKLGDTVKRDEVIVEIETDKVVLEVPALSDGVLAEVVQAEGETVVSKQLLGKISTAQEGDVSSATLKATNEPTPSDRQNAAIENSHNHNADQSPVIRRLLAEHDLQADQIQGSGVGGRLTREDIEREIAKRQAQQVKQEAATEQNTISTVAYSARSEKRVPMTRLRKRIAERLLEAKNSTAMLTTFNEVDMQPIMTLRKTYGEKFEKQHSVRLGFMSFYIKAVVEALKRYPEVNASIDGDDVVYHNYFDISIAVSTPRGLVTPVLRDCDKLSMAEIEKQIKALAEKGRDGKLTVEDLTGGNFTITNGGVFGSLMSTPIINPPQSAILGMHAIKERPIALNGQVVIRPMMYLALSYDHRLIDGRESVGFLVTIKELLEDPTRLLLEI.

Positions 2 to 77 (AIEILVPDLP…VSKQLLGKIS (76 aa)) constitute a Lipoyl-binding domain. N6-lipoyllysine is present on lysine 43. Residues 83–107 (DVSSATLKATNEPTPSDRQNAAIEN) are compositionally biased toward polar residues. The segment at 83–114 (DVSSATLKATNEPTPSDRQNAAIENSHNHNAD) is disordered. Residues 114–151 (DQSPVIRRLLAEHDLQADQIQGSGVGGRLTREDIEREI) form the Peripheral subunit-binding (PSBD) domain. Active-site residues include histidine 380 and aspartate 384.

This sequence belongs to the 2-oxoacid dehydrogenase family. In terms of assembly, forms a 24-polypeptide structural core with octahedral symmetry. Part of the 2-oxoglutarate dehydrogenase (OGDH) complex composed of E1 (2-oxoglutarate dehydrogenase), E2 (dihydrolipoamide succinyltransferase) and E3 (dihydrolipoamide dehydrogenase); the complex contains multiple copies of the three enzymatic components (E1, E2 and E3). It depends on (R)-lipoate as a cofactor.

The catalysed reaction is N(6)-[(R)-dihydrolipoyl]-L-lysyl-[protein] + succinyl-CoA = N(6)-[(R)-S(8)-succinyldihydrolipoyl]-L-lysyl-[protein] + CoA. It participates in amino-acid degradation; L-lysine degradation via saccharopine pathway; glutaryl-CoA from L-lysine: step 6/6. Functionally, E2 component of the 2-oxoglutarate dehydrogenase (OGDH) complex which catalyzes the second step in the conversion of 2-oxoglutarate to succinyl-CoA and CO(2). This chain is Dihydrolipoyllysine-residue succinyltransferase component of 2-oxoglutarate dehydrogenase complex (sucB), found in Haemophilus influenzae (strain ATCC 51907 / DSM 11121 / KW20 / Rd).